The sequence spans 198 residues: Probable GTP-binding protein EngB (198 aa).

The region spanning 22 to 195 (GHPEIAFLGR…WSWLEQTAGL (174 aa)) is the EngB-type G domain. Residues 30–37 (GRSNVGKS), 57–61 (GKTQT), 75–78 (DVPG), 142–145 (TKID), and 174–176 (FSA) contribute to the GTP site. Mg(2+) contacts are provided by Ser37 and Thr59.

Belongs to the TRAFAC class TrmE-Era-EngA-EngB-Septin-like GTPase superfamily. EngB GTPase family. Requires Mg(2+) as cofactor.

In terms of biological role, necessary for normal cell division and for the maintenance of normal septation. The protein is Probable GTP-binding protein EngB of Lacticaseibacillus paracasei (strain ATCC 334 / BCRC 17002 / CCUG 31169 / CIP 107868 / KCTC 3260 / NRRL B-441) (Lactobacillus paracasei).